The following is a 943-amino-acid chain: Valine--tRNA ligase (943 aa).

A 'HIGH' region motif is present at residues 45–55 (PNVTGTLHMGH). The short motif at 541–545 (KMSKS) is the 'KMSKS' region element. Residue lysine 544 coordinates ATP. A coiled-coil region spans residues 875–934 (IDVAAERIRLAKEIEKLEKQISIAQGKLANEGFVARAPAAVIDQEKQRVADFTATLEQLK).

This sequence belongs to the class-I aminoacyl-tRNA synthetase family. ValS type 1 subfamily. In terms of assembly, monomer.

The protein resides in the cytoplasm. It carries out the reaction tRNA(Val) + L-valine + ATP = L-valyl-tRNA(Val) + AMP + diphosphate. Its function is as follows. Catalyzes the attachment of valine to tRNA(Val). As ValRS can inadvertently accommodate and process structurally similar amino acids such as threonine, to avoid such errors, it has a 'posttransfer' editing activity that hydrolyzes mischarged Thr-tRNA(Val) in a tRNA-dependent manner. The sequence is that of Valine--tRNA ligase from Dechloromonas aromatica (strain RCB).